Consider the following 26-residue polypeptide: Dermaseptin-J2 (26 aa).

At Val26 the chain carries Valine amide.

Expressed by the skin glands.

Its subcellular location is the secreted. In terms of biological role, has antimicrobial activity. This is Dermaseptin-J2 from Phasmahyla jandaia (Jandaia leaf frog).